We begin with the raw amino-acid sequence, 709 residues long: Solute carrier organic anion transporter family member 2B1 (709 aa).

A disordered region spans residues 1–38 (MGPRIGPAGEVPQVPDKETKATMGTENTPGGKASPDPQ). Residues 1-49 (MGPRIGPAGEVPQVPDKETKATMGTENTPGGKASPDPQDVRPSVFHNIK) are Cytoplasmic-facing. S34 is modified (phosphoserine). The helical transmembrane segment at 50 to 69 (LFVLCHSLLQLAQLMISGYL) threads the bilayer. The required for E1S and taurocholate transport; required for transporter stability stretch occupies residues 51–69 (FVLCHSLLQLAQLMISGYL). Over 70–88 (KSSISTVEKRFGLSSQTSG) the chain is Extracellular. The chain crosses the membrane as a helical span at residues 89–109 (LLASFNEVGNTALIVFVSYFG). Residues 110–115 (SRVHRP) are Cytoplasmic-facing. A helical membrane pass occupies residues 116–140 (RMIGYGAILVALAGLLMTLPHFISE). At 141–185 (PYRYDNTSPEDMPQDFKASLCLPTTSAPASAPSNGNCSSYTETQH) the chain is on the extracellular side. Residue N176 is glycosylated (N-linked (GlcNAc...) asparagine). A helical membrane pass occupies residues 186 to 215 (LSVVGIMFVAQTLLGVGGVPIQPFGISYID). Residues 216-234 (DFAHNSNSPLYLGILFAVT) lie on the Cytoplasmic side of the membrane. Residues 235–255 (MMGPGLAFGLGSLMLRLYVDI) form a helical membrane-spanning segment. At 256–273 (NQMPEGGISLTIKDPRWV) the chain is on the extracellular side. Residues 274-298 (GAWWLGFLIAAGAVALAAIPYFFFP) traverse the membrane as a helical segment. At 299–366 (KEMPKEKREL…IKVFPRVLLQ (68 aa)) the chain is on the cytoplasmic side. The residue at position 318 (T318) is a Phosphothreonine. A disordered region spans residues 319–342 (DSPARKGKDSPSKQSPGESTKKQD). The residue at position 320 (S320) is a Phosphoserine. Residues 367–388 (TLRHPIFLLVVLSQVCLSSMAA) form a helical membrane-spanning segment. Residues 389-408 (GMATFLPKFLERQFSITASY) are Extracellular-facing. Residues 409–432 (ANLLIGCLSFPSVIVGIVVGGVLV) traverse the membrane as a helical segment. Topologically, residues 433-436 (KRLH) are cytoplasmic. The helical transmembrane segment at 437–460 (LGPVGCGALCLLGMLLCLFFSLPL) threads the bilayer. The Extracellular segment spans residues 461–564 (FFIGCSSHQI…STCSHLVVPF (104 aa)). The 61-residue stretch at 483-543 (LELSPSCMEA…VFYTNCSCVV (61 aa)) folds into the Kazal-like domain. 3 disulfides stabilise this stretch: C489–C520, C495–C516, and C504–C541. N-linked (GlcNAc...) asparagine glycosylation occurs at N538. A helical membrane pass occupies residues 565 to 587 (LLLVSLGSALACLTHTPSFMLIL). The Cytoplasmic segment spans residues 588-596 (RGVKKEDKT). Residues 597–622 (LAVGIQFMFLRILAWMPSPVIHGSAI) form a helical membrane-spanning segment. Over 623–655 (DTTCVHWALSCGRRAVCRYYNNDLLRNRFIGLQ) the chain is Extracellular. The chain crosses the membrane as a helical span at residues 656–673 (FFFKTGSVICFALVLAVL). The Cytoplasmic segment spans residues 674 to 709 (RQQDKEARTKESRSSPAVEQQLLVSGPGKKPEDSRV). The interval 679-709 (EARTKESRSSPAVEQQLLVSGPGKKPEDSRV) is disordered.

It belongs to the organo anion transporter (TC 2.A.60) family. As to expression, strongly expressed in the liver, at the sinusoidal membrane of the hepatocytes. Expressed in the kidney. Expressed in placental trophoblasts and syncytiotrophoblast. Expressed in the small intestine. Expressed in the blood-brain barrier, in endothelial cells of brain capillaries. Expressed in the retina, in the inner nuclear layer and the inner plexiform layer. Expressed in skelettal muscles. In testis, primarily localized to the basal membrane of Sertoli cells and weakly expressed within the tubules. Also expressed in pancreas, lung, heart, colon, ovary and spleen. Expressed in fetal brain, heart, kidney, liver, lung, skeletal muscle, spleen and pancreas. In terms of tissue distribution, highest expression in brain. Predominant isoform compared to isoform 3 in small intestine duodenum, kidney, placenta, and skeletal muscle. Predominant isoform compared to isoform 1 in liver. Also expressed in small intestine duodenum, kidney, brain, placenta, and skeletal muscle.

It is found in the cell membrane. The protein localises to the basal cell membrane. The protein resides in the basolateral cell membrane. It localises to the apical cell membrane. The catalysed reaction is dehydroepiandrosterone 3-sulfate(out) = dehydroepiandrosterone 3-sulfate(in). The enzyme catalyses estrone 3-sulfate(out) = estrone 3-sulfate(in). It carries out the reaction estrone 3-sulfate(out) + hydrogencarbonate(in) = estrone 3-sulfate(in) + hydrogencarbonate(out). It catalyses the reaction taurocholate(out) = taurocholate(in). The catalysed reaction is coproporphyrin III(out) = coproporphyrin III(in). The enzyme catalyses substance P(out) = substance P(in). It carries out the reaction pregnenolone sulfate(out) = pregnenolone sulfate(in). It catalyses the reaction prostaglandin E2(out) = prostaglandin E2(in). The catalysed reaction is prostaglandin D2(out) = prostaglandin D2(in). The enzyme catalyses L-thyroxine(out) = L-thyroxine(in). Its activity is regulated as follows. E1S, DHEA-S and PregS transports are regulated by steroid hormones. In the case of testosterone, transport of E1S and DHEA-S was inhibited, whereas progesterone stimulated E1S, DHEA-S and PregS uptake. Progesterone stimulates high-affinity uptake of E1S whereas it inhibits low-affinity uptake of E1S. Progesterone doesn't affect the uptake of PGE2. Its function is as follows. Mediates the Na(+)-independent transport of steroid sulfate conjugates and other specific organic anions. Responsible for the transport of estrone 3-sulfate (E1S) through the basal membrane of syncytiotrophoblast, highlighting a potential role in the placental absorption of fetal-derived sulfated steroids including the steroid hormone precursor dehydroepiandrosterone sulfate (DHEA-S). Also facilitates the uptake of sulfated steroids at the basal/sinusoidal membrane of hepatocytes, therefore accounting for the major part of organic anions clearance of liver. Mediates the intestinal uptake of sulfated steroids. Mediates the uptake of the neurosteroids DHEA-S and pregnenolone sulfate (PregS) into the endothelial cells of the blood-brain barrier as the first step to enter the brain. Also plays a role in the reuptake of neuropeptides such as substance P/TAC1 and vasoactive intestinal peptide/VIP released from retinal neurons. May act as a heme transporter that promotes cellular iron availability via heme oxygenase/HMOX2 and independently of TFRC. Also transports heme by-product coproporphyrin III (CPIII), and may be involved in their hepatic disposition. Mediates the uptake of other substrates such as prostaglandins D2 (PGD2), E1 (PGE1) and E2 (PGE2), taurocholate, L-thyroxine, leukotriene C4 and thromboxane B2. May contribute to regulate the transport of organic compounds in testis across the blood-testis-barrier. Shows a pH-sensitive substrate specificity which may be ascribed to the protonation state of the binding site and leads to a stimulation of substrate transport in an acidic microenvironment. The exact transport mechanism has not been yet deciphered but most likely involves an anion exchange, coupling the cellular uptake of organic substrate with the efflux of an anionic compound. Hydrogencarbonate/HCO3(-) acts as a probable counteranion that exchanges for organic anions. Cytoplasmic glutamate may also act as counteranion in the placenta. An inwardly directed proton gradient has also been proposed as the driving force of E1S uptake with a (H(+):E1S) stoichiometry of (1:1). Has estrone 3-sulfate (E1S) transport activity comparable with the full-length isoform 1. The protein is Solute carrier organic anion transporter family member 2B1 of Homo sapiens (Human).